Reading from the N-terminus, the 473-residue chain is Sulfate adenylyltransferase subunit 1 (473 aa).

Residues 19-238 form the tr-type G domain; that stretch reads KTLLKFLTCG…IKIKNSISSE (220 aa). Residues 28 to 35 are G1; sequence GSVDDGKS. 28-35 contributes to the GTP binding site; that stretch reads GSVDDGKS. Residues 86 to 90 are G2; the sequence is GITID. The G3 stretch occupies residues 107-110; the sequence is DTPG. Residues 107–111 and 162–165 each bind GTP; these read DTPGH and NKMD. Residues 162-165 are G4; it reads NKMD. The G5 stretch occupies residues 200–202; it reads SAL.

It belongs to the TRAFAC class translation factor GTPase superfamily. Classic translation factor GTPase family. CysN/NodQ subfamily. In terms of assembly, heterodimer composed of CysD, the smaller subunit, and CysN.

The enzyme catalyses sulfate + ATP + H(+) = adenosine 5'-phosphosulfate + diphosphate. Its pathway is sulfur metabolism; hydrogen sulfide biosynthesis; sulfite from sulfate: step 1/3. With CysD forms the ATP sulfurylase (ATPS) that catalyzes the adenylation of sulfate producing adenosine 5'-phosphosulfate (APS) and diphosphate, the first enzymatic step in sulfur assimilation pathway. APS synthesis involves the formation of a high-energy phosphoric-sulfuric acid anhydride bond driven by GTP hydrolysis by CysN coupled to ATP hydrolysis by CysD. The protein is Sulfate adenylyltransferase subunit 1 of Buchnera aphidicola subsp. Acyrthosiphon pisum (strain Tuc7).